A 302-amino-acid polypeptide reads, in one-letter code: Quinolinate synthase (302 aa).

Iminosuccinate is bound by residues His24 and Ser41. Cys86 serves as a coordination point for [4Fe-4S] cluster. Residues 112-114 and Ser129 each bind iminosuccinate; that span reads YVN. Cys171 lines the [4Fe-4S] cluster pocket. Iminosuccinate contacts are provided by residues 197 to 199 and Thr214; that span reads HPE. Cys259 serves as a coordination point for [4Fe-4S] cluster.

It belongs to the quinolinate synthase family. Type 2 subfamily. [4Fe-4S] cluster is required as a cofactor.

It localises to the cytoplasm. The enzyme catalyses iminosuccinate + dihydroxyacetone phosphate = quinolinate + phosphate + 2 H2O + H(+). It participates in cofactor biosynthesis; NAD(+) biosynthesis; quinolinate from iminoaspartate: step 1/1. Catalyzes the condensation of iminoaspartate with dihydroxyacetone phosphate to form quinolinate. The chain is Quinolinate synthase from Dehalococcoides mccartyi (strain ATCC BAA-2100 / JCM 16839 / KCTC 5957 / BAV1).